Here is a 149-residue protein sequence, read N- to C-terminus: Transcriptional repressor NrdR (149 aa).

Residues 3–34 (CPFCAAEETKVVDSRLAADGYQIRRRRECTSC) fold into a zinc finger. Residues 49–139 (PYVIKNNGNR…VYLSFDDIEE (91 aa)) form the ATP-cone domain.

The protein belongs to the NrdR family. It depends on Zn(2+) as a cofactor.

In terms of biological role, negatively regulates transcription of bacterial ribonucleotide reductase nrd genes and operons by binding to NrdR-boxes. The sequence is that of Transcriptional repressor NrdR from Actinobacillus pleuropneumoniae serotype 5b (strain L20).